A 212-amino-acid chain; its full sequence is Cytidylate kinase (212 aa).

Residue 11-19 (GPAASGKGT) participates in ATP binding. A disordered region spans residues 50-69 (GGDPADPAASEEQARSLSRL).

This sequence belongs to the cytidylate kinase family. Type 1 subfamily.

It is found in the cytoplasm. It catalyses the reaction CMP + ATP = CDP + ADP. The catalysed reaction is dCMP + ATP = dCDP + ADP. This Acidiphilium cryptum (strain JF-5) protein is Cytidylate kinase.